The chain runs to 300 residues: NADH-cytochrome b5 reductase 2 (300 aa).

Residues 12–29 (FVYPLVGATIGSIGLAYY) form a helical membrane-spanning segment. In terms of domain architecture, FAD-binding FR-type spans 49–153 (DQWIDLKLKK…KGPVVKWKWE (105 aa)). Residue 156-191 (QFKSIALIGGGTGITPLYQLLREITSNPEDKTKVSL) participates in FAD binding.

Belongs to the flavoprotein pyridine nucleotide cytochrome reductase family. It depends on FAD as a cofactor.

It localises to the mitochondrion outer membrane. The enzyme catalyses 2 Fe(III)-[cytochrome b5] + NADH = 2 Fe(II)-[cytochrome b5] + NAD(+) + H(+). May mediate the reduction of outer membrane cytochrome b5. This is NADH-cytochrome b5 reductase 2 (MCR1) from Lodderomyces elongisporus (strain ATCC 11503 / CBS 2605 / JCM 1781 / NBRC 1676 / NRRL YB-4239) (Yeast).